A 398-amino-acid polypeptide reads, in one-letter code: Circumsporozoite protein (398 aa).

An N-terminal signal peptide occupies residues 1 to 23 (MKNFNLLAVSSILLVDLFRTQWG). A disordered region spans residues 50-110 (AQVRQSASRG…AAAGEAGNNA (61 aa)). The span at 66-93 (PKNEEGADKPKKKDEKQVEPKKPRENKL) shows a compositional bias: basic and acidic residues. Residues 81–89 (KQVEPKKPR) are required for the binding to heparan sulfate proteoglycans (HSPGs) on the surface of host hepatocytes. The interval 92-96 (KLKQP) is region I; contains the proteolytic cleavage site. A run of 19 repeats spans residues 97–105 (AGNNAAAGE), 106–114 (AGNNAAAGE), 115–123 (AGNNAAAGE), 124–132 (AGNNAAAGE), 133–141 (AGNNAAAGE), 142–150 (AGNNAAAGE), 151–159 (AGNNAAGGA), 160–168 (AGNNAAGGE), 169–177 (AGNNAAGGA), 178–186 (AGNNAAAGE), 187–195 (AGNNAAGGE), 196–204 (AGNNAAAGE), 205–213 (AGNNAAGGA), 214–222 (AGNNAAAGE), 223–231 (AGNNAAAGA), 232–240 (AGNNAAAGA), 241–257 (AGNNAAAGEAGAGGAGR), 258–274 (AGNNAAAGEAGAGGAGR), and 275–291 (AGNNAAAGEAGAGGAGG). The span at 97–110 (AGNNAAAGEAGNNA) shows a compositional bias: low complexity. The tract at residues 97 to 240 (AGNNAAAGEA…AAGNNAAAGA (144 aa)) is 16 X 9 AA tandem repeats of A-G-N-N-A-A-[AG]-G-[EA]. Residues 241 to 291 (AGNNAAAGEAGAGGAGRAGNNAAAGEAGAGGAGRAGNNAAAGEAGAGGAGG) are 3 X 17 AA tandem repeats of A-G-N-N-A-A-A-G-E-A-G-A-G-G-A-G-[RG]. Positions 248–310 (GEAGAGGAGR…AGQGQNNGGA (63 aa)) are disordered. A compositionally biased stretch (gly residues) spans 284–293 (AGAGGAGGNA). The region spanning 324–376 (KIRSTIGVEWSPCSVTCGKGVRMRRKVNAANKKPEELDANDLETEVCTMDKCA) is the TSP type-1 domain. 2 disulfides stabilise this stretch: Cys336-Cys370 and Cys340-Cys375. Thr339 carries O-linked (Fuc) threonine glycosylation. Cys375 is lipidated: GPI-anchor amidated cysteine. Residues 376-398 (AGIFNVVSNSLGLVILLVLALFN) constitute a propeptide, removed in mature form.

The protein belongs to the plasmodium circumsporozoite protein family. In terms of processing, during host cell invasion, proteolytically cleaved at the cell membrane in the region I by a papain-like cysteine protease of parasite origin. Cleavage is triggered by the sporozoite contact with highly sulfated heparan sulfate proteoglycans (HSPGs) present on the host hepatocyte cell surface. Cleavage exposes the TSP type-1 (TSR) domain and is required for productive invasion of host hepatocytes but not for adhesion to the host cell membrane. Cleavage is dispensable for sporozoite development in the oocyst, motility and for traversal of host and vector cells. Post-translationally, O-glycosylated; maybe by POFUT2.

Its subcellular location is the cell membrane. The protein localises to the cytoplasm. Its function is as follows. Essential sporozoite protein. In the mosquito vector, required for sporozoite development in the oocyst, migration through the vector hemolymph and entry into the vector salivary glands. In the vertebrate host, required for sporozoite migration through the host dermis and infection of host hepatocytes. Binds to highly sulfated heparan sulfate proteoglycans (HSPGs) on the surface of host hepatocytes. In the vertebrate host, binds to highly sulfated heparan sulfate proteoglycans (HSPGs) on the surface of host hepatocytes and is required for sporozoite invasion of the host hepatocytes. This is Circumsporozoite protein from Plasmodium cynomolgi (strain Ceylon).